A 387-amino-acid chain; its full sequence is Arginine biosynthesis bifunctional protein ArgJ 2 (387 aa).

Substrate-binding residues include threonine 147, lysine 169, threonine 180, glutamate 259, asparagine 382, and threonine 387. Residue threonine 180 is the Nucleophile of the active site.

It belongs to the ArgJ family. Heterotetramer of two alpha and two beta chains.

Its subcellular location is the cytoplasm. The catalysed reaction is N(2)-acetyl-L-ornithine + L-glutamate = N-acetyl-L-glutamate + L-ornithine. It carries out the reaction L-glutamate + acetyl-CoA = N-acetyl-L-glutamate + CoA + H(+). Its pathway is amino-acid biosynthesis; L-arginine biosynthesis; L-ornithine and N-acetyl-L-glutamate from L-glutamate and N(2)-acetyl-L-ornithine (cyclic): step 1/1. It functions in the pathway amino-acid biosynthesis; L-arginine biosynthesis; N(2)-acetyl-L-ornithine from L-glutamate: step 1/4. Catalyzes two activities which are involved in the cyclic version of arginine biosynthesis: the synthesis of N-acetylglutamate from glutamate and acetyl-CoA as the acetyl donor, and of ornithine by transacetylation between N(2)-acetylornithine and glutamate. The chain is Arginine biosynthesis bifunctional protein ArgJ 2 from Nostoc sp. (strain PCC 7120 / SAG 25.82 / UTEX 2576).